The sequence spans 335 residues: dTDP-glucose 4,6-dehydratase (335 aa).

Residues F11–I12, D38–T41, D61–I62, F81–T85, and T100 contribute to the NAD(+) site. T85 contacts substrate. T125 is a binding site for substrate. The active-site Proton donor is D126. Catalysis depends on proton acceptor residues E127 and Y149. Residue Y149–K153 coordinates NAD(+). Substrate is bound at residue N178. N179 serves as a coordination point for NAD(+). Residues K188–I189, P204–Y206, R213, N248, and D271–H275 each bind substrate.

Belongs to the NAD(P)-dependent epimerase/dehydratase family. dTDP-glucose dehydratase subfamily. NAD(+) is required as a cofactor.

It carries out the reaction dTDP-alpha-D-glucose = dTDP-4-dehydro-6-deoxy-alpha-D-glucose + H2O. It functions in the pathway antibiotic biosynthesis. Functionally, involved in the biosynthesis of the two 2,6-deoxysugars, dTDP-L-oleandrose and dTDP-D-desosamine, attached to the macrolactone ring oleandolide to produce the aglycone antibiotic oleandomycin. Catalyzes the dehydration of dTDP-D-glucose to form dTDP-6-deoxy-D-xylo-4-hexulose via a three-step process involving oxidation, dehydration and reduction. The sequence is that of dTDP-glucose 4,6-dehydratase from Streptomyces antibioticus.